The chain runs to 414 residues: Serine/threonine transporter SstT (414 aa).

8 helical membrane passes run 16 to 36 (GSLV…AWVS), 46 to 66 (LGTL…LMLV), 84 to 104 (ILFL…VFSF), 143 to 163 (ALLN…GFAL), 180 to 200 (AVTF…FGLV), 219 to 239 (LVVL…LLVF), 300 to 320 (MAGA…TLGV), and 332 to 352 (VVAS…LLLI).

The protein belongs to the dicarboxylate/amino acid:cation symporter (DAACS) (TC 2.A.23) family.

The protein localises to the cell inner membrane. The catalysed reaction is L-serine(in) + Na(+)(in) = L-serine(out) + Na(+)(out). It carries out the reaction L-threonine(in) + Na(+)(in) = L-threonine(out) + Na(+)(out). Functionally, involved in the import of serine and threonine into the cell, with the concomitant import of sodium (symport system). The protein is Serine/threonine transporter SstT of Salmonella arizonae (strain ATCC BAA-731 / CDC346-86 / RSK2980).